A 130-amino-acid polypeptide reads, in one-letter code: Cytochrome c oxidase subunit 13, mitochondrial (130 aa).

The N-terminal 31 residues, 1 to 31 (MSMMNRNIGFLSRTLKTSVPKRAGLLSFRAY), are a transit peptide targeting the mitochondrion. Residues 32-61 (SNEAKVNWLEEVQAEEEHAKRSSEFWKKVT) are Mitochondrial matrix-facing. A helical membrane pass occupies residues 62–80 (YYIGGPALILASANAYYIY). Over 81–130 (CKHQEHAKHVEDTDPGYSFENLRFKKYPWGDGSKTLFWNDKVNHLKKDDE) the chain is Mitochondrial intermembrane.

It belongs to the cytochrome c oxidase subunit 6A family. In terms of assembly, component of the cytochrome c oxidase (complex IV, CIV), a multisubunit enzyme composed of a catalytic core of 3 subunits and several supernumerary subunits. The complex exists as a monomer or a dimer and forms supercomplexes (SCs) in the inner mitochondrial membrane with ubiquinol-cytochrome c oxidoreductase (cytochrome b-c1 complex, complex III, CIII).

The protein localises to the mitochondrion inner membrane. It participates in energy metabolism; oxidative phosphorylation. Component of the cytochrome c oxidase, the last enzyme in the mitochondrial electron transport chain which drives oxidative phosphorylation. The respiratory chain contains 3 multisubunit complexes succinate dehydrogenase (complex II, CII), ubiquinol-cytochrome c oxidoreductase (cytochrome b-c1 complex, complex III, CIII) and cytochrome c oxidase (complex IV, CIV), that cooperate to transfer electrons derived from NADH and succinate to molecular oxygen, creating an electrochemical gradient over the inner membrane that drives transmembrane transport and the ATP synthase. Cytochrome c oxidase is the component of the respiratory chain that catalyzes the reduction of oxygen to water. Electrons originating from reduced cytochrome c in the intermembrane space (IMS) are transferred via the dinuclear copper A center (CU(A)) of subunit 2 and heme A of subunit 1 to the active site in subunit 1, a binuclear center (BNC) formed by heme A3 and copper B (CU(B)). The BNC reduces molecular oxygen to 2 water molecules unsing 4 electrons from cytochrome c in the IMS and 4 protons from the mitochondrial matrix. The chain is Cytochrome c oxidase subunit 13, mitochondrial (cox13) from Schizosaccharomyces pombe (strain 972 / ATCC 24843) (Fission yeast).